We begin with the raw amino-acid sequence, 379 residues long: Cytochrome b (379 aa).

The next 4 membrane-spanning stretches (helical) occupy residues 34–54 (FGSL…LLAT), 78–99 (WLIR…YLHI), 114–134 (WNIG…GYVL), and 179–199 (FFAL…IHLT). Positions 84 and 98 each coordinate heme b. Heme b is bound by residues H183 and H197. Position 202 (H202) interacts with a ubiquinone. Transmembrane regions (helical) follow at residues 227–247 (TKDM…AFFF), 289–309 (LGGV…PLLH), 321–341 (MSQL…WIGS), and 348–368 (FIII…FLFP).

Belongs to the cytochrome b family. As to quaternary structure, the cytochrome bc1 complex contains 11 subunits: 3 respiratory subunits (MT-CYB, CYC1 and UQCRFS1), 2 core proteins (UQCRC1 and UQCRC2) and 6 low-molecular weight proteins (UQCRH/QCR6, UQCRB/QCR7, UQCRQ/QCR8, UQCR10/QCR9, UQCR11/QCR10 and a cleavage product of UQCRFS1). This cytochrome bc1 complex then forms a dimer. Heme b serves as cofactor.

The protein resides in the mitochondrion inner membrane. In terms of biological role, component of the ubiquinol-cytochrome c reductase complex (complex III or cytochrome b-c1 complex) that is part of the mitochondrial respiratory chain. The b-c1 complex mediates electron transfer from ubiquinol to cytochrome c. Contributes to the generation of a proton gradient across the mitochondrial membrane that is then used for ATP synthesis. This Tinamus major (Great tinamou) protein is Cytochrome b (MT-CYB).